Reading from the N-terminus, the 273-residue chain is Large ribosomal subunit protein uL2 (273 aa).

Disordered stretches follow at residues 28-53 (KPFA…TTRH) and 221-273 (RGTA…RRSK). A compositionally biased stretch (low complexity) spans 39–48 (KSGGRNNNGR).

This sequence belongs to the universal ribosomal protein uL2 family. As to quaternary structure, part of the 50S ribosomal subunit. Forms a bridge to the 30S subunit in the 70S ribosome.

Its function is as follows. One of the primary rRNA binding proteins. Required for association of the 30S and 50S subunits to form the 70S ribosome, for tRNA binding and peptide bond formation. It has been suggested to have peptidyltransferase activity; this is somewhat controversial. Makes several contacts with the 16S rRNA in the 70S ribosome. The chain is Large ribosomal subunit protein uL2 from Enterobacter sp. (strain 638).